The primary structure comprises 358 residues: MGITIKKSTAEQVLRKAYEAAASDDVFLEDWIFLATSLREVDAPRTYTAALVTALLARACDDRVDPRSIKEKYDDRAFSLRTLCHGVVVPMSVELGFDLGATGREPINNQPFFRYDQYSEIVRVQTKARPYLDRVSSALARVDEEDYSTEESFRALVAVLAVCISVANKKQRVAVGSAIVEASLIAETQSFVVSGHDVPRKLQACVAAGLDMVYSEVVSRRINDPSRDFPGDVQVILDGDPLLTVEVRGKSVSWEGLEQFVSSATYAGFRRVALMVDAASHVSLMSADDLTSALERKYECIVKVNESVSSFLRDVFVWSPRDVHSILSAFPEAMYRRMIEIEVREPELDRWAEIFPET.

It carries out the reaction Endonucleolytic cleavage of DNA to give specific double-stranded fragments with terminal 5'-phosphates.. Its function is as follows. A subtype P restriction enzyme that recognizes the double-stranded sequence 5'-GAGCTC-3' and cleaves after T-5. The protein is Type II restriction enzyme SacI of Streptomyces achromogenes.